A 676-amino-acid chain; its full sequence is DNA ligase (676 aa).

NAD(+)-binding positions include 39–43, 88–91, and glutamate 118; these read DYVYD and SLND. The active-site N6-AMP-lysine intermediate is lysine 120. NAD(+) contacts are provided by arginine 141, glutamate 175, lysine 291, and lysine 315. Residues cysteine 409, cysteine 412, cysteine 427, and cysteine 432 each contribute to the Zn(2+) site. Residues 595–676 enclose the BRCT domain; sequence EVESPFKDKT…MVDALDASHF (82 aa).

Belongs to the NAD-dependent DNA ligase family. LigA subfamily. Mg(2+) serves as cofactor. Requires Mn(2+) as cofactor.

It carries out the reaction NAD(+) + (deoxyribonucleotide)n-3'-hydroxyl + 5'-phospho-(deoxyribonucleotide)m = (deoxyribonucleotide)n+m + AMP + beta-nicotinamide D-nucleotide.. DNA ligase that catalyzes the formation of phosphodiester linkages between 5'-phosphoryl and 3'-hydroxyl groups in double-stranded DNA using NAD as a coenzyme and as the energy source for the reaction. It is essential for DNA replication and repair of damaged DNA. The chain is DNA ligase from Enterococcus faecalis (strain ATCC 700802 / V583).